The primary structure comprises 129 residues: MNSSTALMCFALLLISPLCMGYSDEDREADNLRIAEIIKNAQDDDSKINSTQELLDIYRRLYPSLTPEERESIDKFVNEHTDAIIIDGVPIQGGRKARIVGKIVSPGVKGLATGFFEELGSKLAQLFTG.

The signal sequence occupies residues 1–21; sequence MNSSTALMCFALLLISPLCMG. The N-linked (GlcNAc...) asparagine glycan is linked to Asn49.

This sequence belongs to the Turandot family. As to expression, expressed in the fat body (at protein level).

The protein localises to the secreted. Functionally, a humoral factor that plays a role in stress tolerance; gives increased resistance to the lethal effects of bacterial challenge and stress. Regulated by the JAK/STAT pathway and NF-KB-like Relish pathway in the fat body, upd3 in the hemocytes and Mekk1 in response to septic injury and consequent immune response. The polypeptide is Protein Turandot A (Drosophila melanogaster (Fruit fly)).